A 631-amino-acid polypeptide reads, in one-letter code: Pescadillo homolog (631 aa).

Residues 321 to 414 (RLRNLFKGLK…QLLPTNKYFL (94 aa)) enclose the BRCT domain. 2 disordered regions span residues 450–469 (HAQS…EDDT) and 489–569 (EYKK…MVKP). Residues serine 453 and serine 457 each carry the phosphoserine modification. Acidic residues-rich tracts occupy residues 454–469 (DDES…EDDT) and 499–524 (VNED…EELD). The stretch at 510-541 (FDGEQESDEEEEELDEKTKRLQEEKKKMSVQS) forms a coiled coil. Positions 525 to 536 (EKTKRLQEEKKK) are enriched in basic and acidic residues. The segment covering 543-552 (KVHKVNKRQL) has biased composition (basic residues). Basic and acidic residues predominate over residues 553–562 (HKAEVDEHRL).

The protein belongs to the pescadillo family.

The protein resides in the nucleus. It is found in the nucleolus. It localises to the nucleoplasm. Functionally, required for maturation of ribosomal RNAs and formation of the large ribosomal subunit. This Drosophila mojavensis (Fruit fly) protein is Pescadillo homolog.